The following is a 184-amino-acid chain: Alpha-tubulin N-acetyltransferase (184 aa).

Positions 1-174 (MNIPPEKMHN…NNFVIFAEYF (174 aa)) constitute an N-acetyltransferase domain. Acetyl-CoA is bound by residues 108–121 (FYIQ…GLGL) and 144–153 (SYKLQSFLKK).

It belongs to the acetyltransferase ATAT1 family.

It catalyses the reaction L-lysyl-[alpha-tubulin] + acetyl-CoA = N(6)-acetyl-L-lysyl-[alpha-tubulin] + CoA + H(+). Its function is as follows. Specifically acetylates 'Lys-40' in alpha-tubulin on the lumenal side of microtubules. Promotes microtubule destabilization and accelerates microtubule dynamics; this activity may be independent of acetylation activity. Acetylates alpha-tubulin with a slow enzymatic rate, due to a catalytic site that is not optimized for acetyl transfer. Enters the microtubule through each end and diffuses quickly throughout the lumen of microtubules. Acetylates only long/old microtubules because of its slow acetylation rate since it does not have time to act on dynamically unstable microtubules before the enzyme is released. In Plasmodium knowlesi (strain H), this protein is Alpha-tubulin N-acetyltransferase.